Consider the following 201-residue polypeptide: Small ribosomal subunit protein uS4 (201 aa).

Residues 91-151 (ARLDNVIYRA…DRSRSMLWFD (61 aa)) form the S4 RNA-binding domain.

The protein belongs to the universal ribosomal protein uS4 family. Part of the 30S ribosomal subunit. Contacts protein S5. The interaction surface between S4 and S5 is involved in control of translational fidelity.

Its function is as follows. One of the primary rRNA binding proteins, it binds directly to 16S rRNA where it nucleates assembly of the body of the 30S subunit. In terms of biological role, with S5 and S12 plays an important role in translational accuracy. The polypeptide is Small ribosomal subunit protein uS4 (Corynebacterium urealyticum (strain ATCC 43042 / DSM 7109)).